Reading from the N-terminus, the 75-residue chain is Mu-conotoxin GIIIA (75 aa).

An N-terminal signal peptide occupies residues 1-20 (MMSKLGVLLTICLLLFPLTA). The propeptide occupies 21–51 (LPMDGDEPANRPVERMQDNISSEQYPLFEKR). 3 disulfides stabilise this stretch: Cys54–Cys66, Cys55–Cys71, and Cys61–Cys72. 4-hydroxyproline; partial is present on residues Pro57 and Pro58. Pro68 carries the post-translational modification 4-hydroxyproline. Ala73 is modified (alanine amide).

This sequence belongs to the conotoxin M superfamily. Post-translationally, hydroxylated; hydroxylations improve the ability to block Nav1.4/SCN4A sodium channels but does not affect folding. As to expression, expressed by the venom duct.

The protein resides in the secreted. Its function is as follows. Mu-conotoxins block voltage-gated sodium channels (Nav). This toxin potently blocks rat Nav1.4/SCN4A (IC(50)= 19-110 nM). It also moderately blocks rNav1.1/SCN1A (Kd=260 nM), rNav1.2/SCN2A (IC(50)=2.7-17.8 uM), and mNav1.6/SCN8A (IC(50)=680 nM). The inhibition is reversible. In vivo, induces paralysis to an isolated skeletal muscle preparation from frog (cutaneous pectoralis) within a few minutes. This is Mu-conotoxin GIIIA from Conus geographus (Geography cone).